We begin with the raw amino-acid sequence, 2670 residues long: Inositol 1,4,5-trisphosphate-gated calcium channel ITPR3 (2670 aa).

Over 1 to 2201 the chain is Cytoplasmic; it reads MNEMSSFLHI…LIYWFSRRMT (2201 aa). MIR domains follow at residues 113–173, 174–224, 232–288, 295–372, and 378–434; these read GDVV…LRSN, GDNV…INLF, EEVL…VEVV, GGAG…LDPT, and DSFV…IVSV. 1D-myo-inositol 1,4,5-trisphosphate contacts are provided by arginine 266, threonine 268, leucine 269, and arginine 270. Positions 321–344 are disordered; it reads PSYKGDVSDPKAAGPGAQSRTGRR. Arginine 503, lysine 507, arginine 510, tyrosine 567, arginine 568, and lysine 569 together coordinate 1D-myo-inositol 1,4,5-trisphosphate. Residue arginine 743 participates in Ca(2+) binding. Phosphoserine is present on residues serine 916 and serine 934. The Ca(2+) site is built by glutamate 1122 and glutamate 1125. Over residues 1134–1153 the composition is skewed to basic and acidic residues; sequence VKGEEGEAGASKDKKERPSD. Disordered regions lie at residues 1134-1164 and 1807-1849; these read VKGE…HGEK and NMSD…GLHR. 3 positions are modified to phosphoserine: serine 1813, serine 1832, and serine 1834. Residues 1831–1842 are compositionally biased toward low complexity; that stretch reads SSFSMPSSSRYS. Residues glutamate 1881 and glutamate 1945 each contribute to the Ca(2+) site. Residues alanine 1995, glutamate 2148, and lysine 2151 each contribute to the ATP site. Residues 2202 to 2222 traverse the membrane as a helical segment; it reads LWGSISFNLAVFINIIIAFFY. Over 2223–2233 the chain is Extracellular; sequence PYVEGASTGVL. The chain crosses the membrane as a helical span at residues 2234–2254; that stretch reads GSPLISLLFWILICFSIAALF. At 2255-2263 the chain is on the cytoplasmic side; sequence TKHYSVRPL. Residues 2264–2284 traverse the membrane as a helical segment; it reads IVALVLRSIYYLGIGPTLNIL. Topologically, residues 2285-2324 are extracellular; sequence GALNLTNKIVFVVSFVGNRGTFIRGYKAMVMDMEFLYHVG. A helical transmembrane segment spans residues 2325-2345; it reads YILTSVLGLFAHELFYSILLF. The Cytoplasmic segment spans residues 2346-2367; it reads DLIYREETLFNVIKSVTRNGRS. A helical membrane pass occupies residues 2368 to 2388; that stretch reads ILLTALLALILVYLFSIVGFL. Residues 2389 to 2495 are Extracellular-facing; it reads FLKDDFILEV…ESLFPARVVY (107 aa). An intrachain disulfide couples cysteine 2454 to cysteine 2460. The chain crosses the membrane as a helical span at residues 2496–2516; the sequence is DLLFFFIVIIIVLNLIFGVII. Topologically, residues 2517 to 2670 are cytoplasmic; the sequence is DTFADLRSEK…FVDVQNCMSR (154 aa). ATP contacts are provided by cysteine 2537 and phenylalanine 2538. Position 2537 (cysteine 2537) interacts with Zn(2+). Zn(2+) contacts are provided by cysteine 2540 and histidine 2557. 4 residues coordinate ATP: lysine 2559, histidine 2562, asparagine 2563, and methionine 2564. Residue histidine 2562 coordinates Zn(2+). Residue threonine 2580 coordinates Ca(2+). Serine 2608 and serine 2669 each carry phosphoserine.

Belongs to the InsP3 receptor family. In terms of assembly, homotetramer. Homodimer. Interacts with TRPC1 and TRPC3. Interacts with TRPC4. Interacts with TRPV4. Interacts with SIGMAR1. Interacts with AKT1 and PML. Interacts with IRAG2 (via coiled-coil domain). Interacts with CABP1. Interacts with TMBIM4/LFG4. Interacts with CEMIP. Interacts with TESPA1. Interacts with TMEM203. Interacts with BOK; regulates ITPR3 expression. Interacts with BCL2L10. Interacts with CHGA and CHGB. In terms of processing, phosphorylated by AKT1 on serine and/or threonine residues.

It is found in the endoplasmic reticulum membrane. It localises to the cytoplasmic vesicle. The protein localises to the secretory vesicle membrane. It catalyses the reaction Ca(2+)(in) = Ca(2+)(out). Inositol 1,4,5-trisphosphate-gated calcium channel is regulated by cytosolic calcium in a biphasic manner. At low concentrations, cytosolic calcium binds at a high-affinity juxtamembrane domain (JD) calcium binding site, allowing ITPR3 to activate by escaping a low-energy resting state through an ensemble of preactivated states. At high cytosolic calcium concentrations, ITPR3 preferentially enters an inhibited state stabilized by calcium binding at a second, low-affinity cytoplasmic domain (CD) calcium binding site. Functionally, inositol 1,4,5-trisphosphate-gated calcium channel that, upon 1D-myo-inositol 1,4,5-trisphosphate binding, transports calcium from the endoplasmic reticulum lumen to cytoplasm, thus releasing the intracellular calcium and therefore participates in cellular calcium ion homeostasis. 11D-myo-inositol 1,4,5-trisphosphate binds to the ligand-free channel without altering its global conformation, yielding the low-energy resting state, then progresses through resting-to preactivated transitions to the higher energy preactivated state, which increases affinity for calcium, promoting binding of the low basal cytosolic calcium at the juxtamembrane domain (JD) site, favoring the transition through the ensemble of high-energy intermediate states along the trajectory to the fully-open activated state. Upon opening, releases calcium in the cytosol where it can bind to the low-affinity cytoplasmic domain (CD) site and stabilizes the inhibited state to terminate calcium release. This chain is Inositol 1,4,5-trisphosphate-gated calcium channel ITPR3, found in Rattus norvegicus (Rat).